A 214-amino-acid chain; its full sequence is Probable transaldolase (214 aa).

Lysine 83 functions as the Schiff-base intermediate with substrate in the catalytic mechanism.

It belongs to the transaldolase family. Type 3B subfamily.

The protein localises to the cytoplasm. The enzyme catalyses D-sedoheptulose 7-phosphate + D-glyceraldehyde 3-phosphate = D-erythrose 4-phosphate + beta-D-fructose 6-phosphate. It functions in the pathway carbohydrate degradation; pentose phosphate pathway; D-glyceraldehyde 3-phosphate and beta-D-fructose 6-phosphate from D-ribose 5-phosphate and D-xylulose 5-phosphate (non-oxidative stage): step 2/3. Its function is as follows. Transaldolase is important for the balance of metabolites in the pentose-phosphate pathway. The chain is Probable transaldolase from Clostridium tetani (strain Massachusetts / E88).